Here is a 326-residue protein sequence, read N- to C-terminus: MASLRELRTRIKSVNSTKKITKAQELIATSRITKAQARVDDAEPYADEITRVVQRLAAASTLDHKILQEPTDASRAAILVVSSDRGMCGGYNNNVFKKTAELRKRLENEGKDVVLYVSGNKGISYYNFRGEDIAGAWSGYSQDPDYAATHDVRRHLIDGFVAGSEGTAKWREGLKAEEGQAVQGFDEVHIVYTRFESMLSQKPEAHRLLPIETVVEEEKFELGEDLVSDKVDHIAADYDFEPDPDTLLKALLPQYVSRGIFAAMLESAASESAARRTAMSAATDNATDLVKQLSRVANQARQAQITQEITEIVGGASALADSGESD.

The protein belongs to the ATPase gamma chain family. As to quaternary structure, F-type ATPases have 2 components, CF(1) - the catalytic core - and CF(0) - the membrane proton channel. CF(1) has five subunits: alpha(3), beta(3), gamma(1), delta(1), epsilon(1). CF(0) has three main subunits: a, b and c.

The protein resides in the cell membrane. In terms of biological role, produces ATP from ADP in the presence of a proton gradient across the membrane. The gamma chain is believed to be important in regulating ATPase activity and the flow of protons through the CF(0) complex. The protein is ATP synthase gamma chain of Corynebacterium jeikeium (strain K411).